The sequence spans 113 residues: Endoribonuclease SymE (113 aa).

The region spanning 29–74 is the SpoVT-AbrB domain; sequence SRYPDYSRIPAITLKGQWLEAAGFATGTAVDVKVMEGCIVLTAQPA.

Belongs to the SymE family.

It localises to the cytoplasm. Its function is as follows. Involved in the degradation and recycling of damaged RNA. It is itself a target for degradation by the ATP-dependent protease Lon. In Shigella flexneri serotype 5b (strain 8401), this protein is Endoribonuclease SymE.